The primary structure comprises 262 residues: Ornithine carbamoyltransferase (262 aa).

Residues 3–7, Gln30, Arg54, and 81–84 each bind carbamoyl phosphate; these read STRTR and HPTQ. Residues Asn114, Asp178, and 182-183 contribute to the L-ornithine site; that span reads SM. Carbamoyl phosphate contacts are provided by residues 219 to 222 and Thr247; that span reads HCLP.

The protein belongs to the aspartate/ornithine carbamoyltransferase superfamily. OTCase family.

Its subcellular location is the cytoplasm. The enzyme catalyses carbamoyl phosphate + L-ornithine = L-citrulline + phosphate + H(+). The protein operates within amino-acid biosynthesis; L-arginine biosynthesis; L-arginine from L-ornithine and carbamoyl phosphate: step 1/3. It participates in amino-acid degradation; L-arginine degradation via ADI pathway; carbamoyl phosphate from L-arginine: step 2/2. Reversibly catalyzes the transfer of the carbamoyl group from carbamoyl phosphate (CP) to the N(epsilon) atom of ornithine (ORN) to produce L-citrulline. The protein is Ornithine carbamoyltransferase (argF) of Neisseria meningitidis.